The primary structure comprises 1000 residues: MVHNAYDSFQLLKDCPARIDAVESYGSKLFAGCYDGSLRIYSPPESSASDPSELHQETYVLEKTVAGFSKKPIVAMEVLASRELLLSLSESIAFHGLPNLETVAVITKAKGANAYSWDDRRGFLCFSRQKRVCVFKHDGGGGFVEVRDYGVPDTVKSISWCGENICLGIKKEYVILNTANGTLSEVFPSGRVAPPLVISLPSGELILGKENIGVFVDQNGKLLQTERICWSEAPTSIVIQNPYAIALLPRRVEVRLLRSPYPLIQTIVLQNIRRLVKSNNAVIVGLDNSVYVLFPVSIGAQIVQLTASGNFEEALALCKVLPPDESSLRAAKESSIHTRFAHYLFENGSYEEAMEHFLASQVDITHVLSMYPSIILPKTTIIPQPDKMVDISGDEASLSRGSSGISDDMESSSPRYFLESEDNADLESKKMSHNTLMALIKYLLKRRPAVIEKATSEGTEEVISDAVGKTYGANDSSKSKKSSKGRGMIPLNSGAREMAAILDTALLQALLHTGQSGAAIELLKGVNYSDVKICEEILMKSKNYSALLELFKSNSMHHEALKLLNQLADESKTNQSQTDVTQIFSPELIIEYLKPLCRTDPMLVLEYSMLVLESCPTQTIDLFLSGNISADLVNSYLKQHAPNMQGRYLELMMAMNDTAVSGNLQNEMVQIYLSEVLDLYAAKSAQQKWDEKDHPPERKKLLSALESISGYSPQPLLKRLPRDALYEERAVILGKMNQHELALSIYVHKLHAPDLALAYCDRIYESVTYLPSGKPSSNIYLTVLQIYLNPKKSAKDFAKRIVALGSFESSDTTKMMDSVLSSKAKGGRSKKIVAIEGAEDMRVGLSSSTDSGRSDVDTEEPLEEGDSTVMISEVLDLLSQRWERINGAQALKLLPRETKLHNLLPFLAPLLRNSSEAHRNFSVIKSLRQSENLQVKEELYKHRKGVAQVTSESMCSLCNKKIGTSVFAVYPNGKTLVHFVCFRDSQGMKAVSKTTHGRRR.

Positions 16–282 constitute a CNH domain; sequence PARIDAVESY…RRLVKSNNAV (267 aa). A disordered region spans residues 394–413; sequence DEASLSRGSSGISDDMESSS. Residues 607–796 form a CHCR repeat; sequence YSMLVLESCP…YLNPKKSAKD (190 aa). Residues 844 to 864 form a disordered region; the sequence is GLSSSTDSGRSDVDTEEPLEE.

Belongs to the VAM6/VPS39 family. In terms of assembly, homooligomer. Component of the homotypic fusion and vacuole protein sorting (HOPS) complex composed of the class C Vps core proteins VPS11, VCL1, VPS18 and VPS33, which in HOPS further associates with VPS39 and VPS41. Interacts directly with VPS11. Binds to RABG3B.

The protein localises to the cytoplasm. The protein resides in the vacuole membrane. Functionally, essential protein required during embryogenesis. Believed to act in part as a component of the putative HOPS endosomal tethering complex. HOPS is required for the central vacuole formation. May play a role in clustering and fusion of late endosomes and lysosomes. Plays a role in vesicle-mediated protein trafficking to lysosomal compartments including the endocytic membrane transport and autophagic pathways. Required for fusion of endosomes and autophagosomes with lysosomes. This is Vacuolar sorting protein 39 from Arabidopsis thaliana (Mouse-ear cress).